Reading from the N-terminus, the 244-residue chain is Uridylate kinase (244 aa).

ATP is bound at residue 18–21 (KVSG). Glycine 60 is a UMP binding site. The ATP site is built by glycine 61 and arginine 65. Residues aspartate 80 and 141–148 (TGNPFCTT) contribute to the UMP site. ATP-binding residues include threonine 168, glutamine 169, tyrosine 174, and aspartate 177.

This sequence belongs to the UMP kinase family. In terms of assembly, homohexamer.

It is found in the cytoplasm. It carries out the reaction UMP + ATP = UDP + ADP. The protein operates within pyrimidine metabolism; CTP biosynthesis via de novo pathway; UDP from UMP (UMPK route): step 1/1. With respect to regulation, inhibited by UTP. Catalyzes the reversible phosphorylation of UMP to UDP. In Rickettsia typhi (strain ATCC VR-144 / Wilmington), this protein is Uridylate kinase.